A 378-amino-acid chain; its full sequence is Ribosomal RNA large subunit methyltransferase G (378 aa).

Belongs to the methyltransferase superfamily. RlmG family.

The protein resides in the cytoplasm. It carries out the reaction guanosine(1835) in 23S rRNA + S-adenosyl-L-methionine = N(2)-methylguanosine(1835) in 23S rRNA + S-adenosyl-L-homocysteine + H(+). Specifically methylates the guanine in position 1835 (m2G1835) of 23S rRNA. This Salmonella paratyphi B (strain ATCC BAA-1250 / SPB7) protein is Ribosomal RNA large subunit methyltransferase G.